A 203-amino-acid chain; its full sequence is MTRPLAPGFHIPPDLLLRAYATGVFPMAEHADDPEVFWVRPEMRGIIPLDKFHVPKSLRKLLRRQPYEVRYDTDFTGVIDACAEPSAERAETWINEPIRVAYTELFKRGHCHTVEAWREGKLVGGLYGVSLGRAFFGESMFSREPNASKICLVHLVERLKAGGFLLLDTQFTTDHLRRFGAIDVPRRRYEQMLAEALEETAKF.

It belongs to the L/F-transferase family.

The protein localises to the cytoplasm. It carries out the reaction N-terminal L-lysyl-[protein] + L-leucyl-tRNA(Leu) = N-terminal L-leucyl-L-lysyl-[protein] + tRNA(Leu) + H(+). The enzyme catalyses N-terminal L-arginyl-[protein] + L-leucyl-tRNA(Leu) = N-terminal L-leucyl-L-arginyl-[protein] + tRNA(Leu) + H(+). It catalyses the reaction L-phenylalanyl-tRNA(Phe) + an N-terminal L-alpha-aminoacyl-[protein] = an N-terminal L-phenylalanyl-L-alpha-aminoacyl-[protein] + tRNA(Phe). Its function is as follows. Functions in the N-end rule pathway of protein degradation where it conjugates Leu, Phe and, less efficiently, Met from aminoacyl-tRNAs to the N-termini of proteins containing an N-terminal arginine or lysine. The polypeptide is Leucyl/phenylalanyl-tRNA--protein transferase (Chelativorans sp. (strain BNC1)).